A 101-amino-acid polypeptide reads, in one-letter code: UPF0235 protein CJA_0091 (101 aa).

Belongs to the UPF0235 family.

This chain is UPF0235 protein CJA_0091, found in Cellvibrio japonicus (strain Ueda107) (Pseudomonas fluorescens subsp. cellulosa).